The sequence spans 777 residues: Biotin sulfoxide reductase (777 aa).

Mo-bis(molybdopterin guanine dinucleotide) is bound at residue S148.

Belongs to the prokaryotic molybdopterin-containing oxidoreductase family. Mo-bis(molybdopterin guanine dinucleotide) is required as a cofactor.

It carries out the reaction [thioredoxin]-disulfide + L-methionine + H2O = L-methionine (S)-S-oxide + [thioredoxin]-dithiol. Functionally, this enzyme may serve as a scavenger, allowing the cell to utilize biotin sulfoxide as a biotin source. It reduces a spontaneous oxidation product of biotin, D-biotin D-sulfoxide (BSO or BDS), back to biotin. Also exhibits methionine-(S)-sulfoxide (Met-S-SO) reductase activity, acting specifically on the (S) enantiomer in the free, but not the protein-bound form. It thus plays a role in assimilation of oxidized methionines. This Escherichia coli (strain K12) protein is Biotin sulfoxide reductase (bisC).